A 369-amino-acid polypeptide reads, in one-letter code: Endophilin-A (369 aa).

In terms of domain architecture, BAR spans 18–248; the sequence is TEKMGGAEGT…LQEKRSEAES (231 aa). Residues 227 to 247 are a coiled coil; sequence QCADVLRGLQETLQEKRSEAE. Residues 266–295 form a disordered region; the sequence is GGGGGLNEDGTPSHISSSASPLPSPMRSPA. Positions 277–294 are enriched in low complexity; it reads PSHISSSASPLPSPMRSP. Residues 305 to 364 enclose the SH3 domain; sequence QQQPCCQALYDFEPENPGELAFKENDIITLLNRVDDNWFEGAVNGRTGYFPQSYVQVQVP.

It belongs to the endophilin family.

The protein resides in the cytoplasm. It is found in the membrane. Required presynaptically at the neuromuscular junction. Implicated in synaptic vesicle endocytosis. This Drosophila erecta (Fruit fly) protein is Endophilin-A.